We begin with the raw amino-acid sequence, 510 residues long: Bifunctional purine biosynthesis protein PurH (510 aa).

An MGS-like domain is found at 1 to 142 (MRALLSVSDK…KNYKDVMVLC (142 aa)).

The protein belongs to the PurH family.

The catalysed reaction is (6R)-10-formyltetrahydrofolate + 5-amino-1-(5-phospho-beta-D-ribosyl)imidazole-4-carboxamide = 5-formamido-1-(5-phospho-D-ribosyl)imidazole-4-carboxamide + (6S)-5,6,7,8-tetrahydrofolate. The enzyme catalyses IMP + H2O = 5-formamido-1-(5-phospho-D-ribosyl)imidazole-4-carboxamide. It functions in the pathway purine metabolism; IMP biosynthesis via de novo pathway; 5-formamido-1-(5-phospho-D-ribosyl)imidazole-4-carboxamide from 5-amino-1-(5-phospho-D-ribosyl)imidazole-4-carboxamide (10-formyl THF route): step 1/1. It participates in purine metabolism; IMP biosynthesis via de novo pathway; IMP from 5-formamido-1-(5-phospho-D-ribosyl)imidazole-4-carboxamide: step 1/1. The chain is Bifunctional purine biosynthesis protein PurH from Campylobacter jejuni subsp. doylei (strain ATCC BAA-1458 / RM4099 / 269.97).